Consider the following 265-residue polypeptide: MSFDDGVVKAQTDPFALKRGGHNVQKWTSYALFKLFKEFRINKNYSKLIDFLTENFPNNVKNKTFNFSSTGHLFHSLHAYVPSVSDLVKERKQIRLQTEYLAKLFNNTINDFKLYTELYEFIERTEGVDCCCPCQLLHKSLLNTKNYVENLNCKLFDIKPPKFKKEPFDNILYKYSLNYKSLLLKKKEKHTSTGCTRKKKIKHRQILNDKVIYLQNSNKNKLFELSGLSLKSCRHDFVTVESQTRAGDEIASFIRYCRLCGMSGC.

Belongs to the baculoviridae LEF-5 family. Interacts (via N-terminus) with itself.

It localises to the host nucleus. Its function is as follows. Plays a role in the transcription of late viral genes. May function as an transcriptional initiation factor. The polypeptide is Late expression factor 5 (LEF-5) (Lepidoptera (butterflies and moths)).